Here is a 441-residue protein sequence, read N- to C-terminus: UPF0761 membrane protein RSc1559 (441 aa).

6 consecutive transmembrane segments (helical) span residues 44–64, 101–121, 141–161, 182–202, 207–227, and 248–268; these read VLSL…FPMF, GLTA…MLTV, VLVF…SLSV, VVVG…LYVF, LVAW…FEIA, and FAAL…TLLG.

Belongs to the UPF0761 family.

The protein localises to the cell inner membrane. The protein is UPF0761 membrane protein RSc1559 of Ralstonia nicotianae (strain ATCC BAA-1114 / GMI1000) (Ralstonia solanacearum).